The chain runs to 589 residues: Proton pump-interactor 2 (589 aa).

The stretch at 205–245 (EDSLAEKEASINRVKSMAVELNEVKKELDAITWKINHLSDK) forms a coiled coil. 4 stretches are compositionally biased toward basic and acidic residues: residues 370 to 383 (KGGE…REDS), 395 to 408 (TDKR…KAMD), 426 to 450 (VYEK…REEQ), and 504 to 534 (ESDH…KERS). 2 disordered regions span residues 370–450 (KGGE…REEQ) and 485–534 (KECE…KERS). A coiled-coil region spans residues 431 to 500 (KKEEEEVDEE…AKKKAAANSS (70 aa)). Residues 568–588 (WVWGLSSAALAVALFLVVLLL) form a helical membrane-spanning segment.

The protein belongs to the plant Proton pump-interactor protein family. As to expression, expressed in seedlings and flowers.

The protein localises to the cell membrane. It is found in the endoplasmic reticulum membrane. Its function is as follows. May regulate plasma membrane ATPase activity. This chain is Proton pump-interactor 2 (PPI2), found in Arabidopsis thaliana (Mouse-ear cress).